The following is a 57-amino-acid chain: MTGAGTPSQGKKNKTTHVKCRRCGEKSYHKQKKVCASCGFGKSAKRRDYAWQSKQGE.

4 residues coordinate Zn(2+): Cys20, Cys23, Cys35, and Cys38. Residues 20–38 (CRRCGEKSYHKQKKVCASC) form a C4-type zinc finger.

It belongs to the eukaryotic ribosomal protein eL37 family. Requires Zn(2+) as cofactor.

In terms of biological role, binds to the 23S rRNA. This Natronomonas pharaonis (strain ATCC 35678 / DSM 2160 / CIP 103997 / JCM 8858 / NBRC 14720 / NCIMB 2260 / Gabara) (Halobacterium pharaonis) protein is Large ribosomal subunit protein eL37.